The primary structure comprises 443 residues: Eukaryotic translation initiation factor 5 (443 aa).

29–36 (GRGNGIKT) is a binding site for GTP. Residues 147–178 (PEVKKGSKDKKAMRRAEKERLKEGEAADEELK) are compositionally biased toward basic and acidic residues. 2 disordered regions span residues 147-244 (PEVK…LTDT) and 271-293 (EPEKKKKAASNQNGGSQNGNSKN). Residues 179-188 (KVKKEVKKKG) show a composition bias toward basic residues. Residues 207 to 227 (SGSDEDRRSPTHKQIEEKEEA) are compositionally biased toward basic and acidic residues. Acidic residues predominate over residues 228-237 (KDEDDDDDDG). The span at 280–291 (SNQNGGSQNGNS) shows a compositional bias: low complexity. Residues 284–443 (GGSQNGNSKN…QNAESESDEE (160 aa)) form the W2 domain.

The protein belongs to the eIF-2-beta/eIF-5 family.

Functionally, catalyzes the hydrolysis of GTP bound to the 40S ribosomal initiation complex (40S.mRNA.Met-tRNA[F].eIF-2.GTP) with the subsequent joining of a 60S ribosomal subunit resulting in the release of eIF-2 and the guanine nucleotide. The subsequent joining of a 60S ribosomal subunit results in the formation of a functional 80S initiation complex (80S.mRNA.Met-tRNA[F]). This is Eukaryotic translation initiation factor 5 (EIF5) from Phaseolus vulgaris (Kidney bean).